We begin with the raw amino-acid sequence, 670 residues long: CLK4-associating serine/arginine rich protein (670 aa).

A Phosphoserine modification is found at serine 101. Disordered regions lie at residues 171–232 and 258–670; these read TVAE…GMAD and EKAM…HYRH. The span at 182–214 shows a compositional bias: acidic residues; sequence PEEEESPAEEESNSDEDEVIPDIDVEVDVDELN. Residues 265–283 show a composition bias toward basic residues; sequence RRSRRQRREFREKRLRGRK. 2 positions are modified to phosphoserine: serine 285 and serine 294. The span at 290–313 shows a compositional bias: basic and acidic residues; it reads ARRDSPTYDPYKRSPSESSSESRS. Phosphothreonine is present on threonine 327. Phosphoserine is present on residues serine 331 and serine 335. The segment covering 340-355 has biased composition (low complexity); the sequence is AAAAAAAAASGAATGK. A compositionally biased stretch (pro residues) spans 356 to 365; it reads PPAPPQPGGP. Low complexity predominate over residues 378 to 400; it reads STSSSSSSASRTSSSRSRSSSSS. 2 stretches are compositionally biased toward basic residues: residues 411–443 and 481–491; these read SGRH…RRHS and RGGRGPRHHSS. A compositionally biased stretch (low complexity) spans 492–529; sequence SRSSWSLSPSRSRSLTRSRSPSLSRSRSLSRSRSQSHS. Residue serine 543 is modified to Phosphoserine. The residue at position 569 (threonine 569) is a Phosphothreonine. Residues 581–643 are a coiled coil; sequence ALNRQFKADK…ERQYSRQSRS (63 aa). Basic and acidic residues-rich tracts occupy residues 586 to 613 and 621 to 637; these read FKAD…ELRA and KERE…ERQY. Positions 638–647 are enriched in low complexity; the sequence is SRQSRSPSPR. A compositionally biased stretch (basic residues) spans 655–670; it reads SRRRSRSRSRSPHYRH.

This sequence belongs to the splicing factor SR family. Probably interacts with CLK4. In terms of processing, phosphorylated in vitro by CLK4.

Its subcellular location is the nucleus. Its function is as follows. Probably functions as an alternative splicing regulator. May regulate the mRNA splicing of genes such as CLK1. May act by regulating members of the CLK kinase family. This is CLK4-associating serine/arginine rich protein (CLASRP) from Bos taurus (Bovine).